The following is a 265-amino-acid chain: Ribosomal RNA small subunit methyltransferase A (265 aa).

Positions 13, 15, 40, 62, 87, and 106 each coordinate S-adenosyl-L-methionine.

The protein belongs to the class I-like SAM-binding methyltransferase superfamily. rRNA adenine N(6)-methyltransferase family. RsmA subfamily.

It localises to the cytoplasm. The enzyme catalyses adenosine(1518)/adenosine(1519) in 16S rRNA + 4 S-adenosyl-L-methionine = N(6)-dimethyladenosine(1518)/N(6)-dimethyladenosine(1519) in 16S rRNA + 4 S-adenosyl-L-homocysteine + 4 H(+). Its function is as follows. Specifically dimethylates two adjacent adenosines (A1518 and A1519) in the loop of a conserved hairpin near the 3'-end of 16S rRNA in the 30S particle. May play a critical role in biogenesis of 30S subunits. The chain is Ribosomal RNA small subunit methyltransferase A from Persephonella marina (strain DSM 14350 / EX-H1).